The chain runs to 285 residues: Acetyl-coenzyme A carboxylase carboxyl transferase subunit beta (285 aa).

The CoA carboxyltransferase N-terminal domain maps to 23-285 (VFRRCDGCSH…HLTAGRRARR (263 aa)). Residues cysteine 27, cysteine 30, cysteine 46, and cysteine 49 each contribute to the Zn(2+) site. The segment at 27-49 (CDGCSHTHDAAELARTFEVCSQC) adopts a C4-type zinc-finger fold.

This sequence belongs to the AccD/PCCB family. Acetyl-CoA carboxylase is a heterohexamer composed of biotin carboxyl carrier protein (AccB), biotin carboxylase (AccC) and two subunits each of ACCase subunit alpha (AccA) and ACCase subunit beta (AccD). Requires Zn(2+) as cofactor.

The protein localises to the cytoplasm. The enzyme catalyses N(6)-carboxybiotinyl-L-lysyl-[protein] + acetyl-CoA = N(6)-biotinyl-L-lysyl-[protein] + malonyl-CoA. The protein operates within lipid metabolism; malonyl-CoA biosynthesis; malonyl-CoA from acetyl-CoA: step 1/1. Its function is as follows. Component of the acetyl coenzyme A carboxylase (ACC) complex. Biotin carboxylase (BC) catalyzes the carboxylation of biotin on its carrier protein (BCCP) and then the CO(2) group is transferred by the transcarboxylase to acetyl-CoA to form malonyl-CoA. This Sorangium cellulosum (strain So ce56) (Polyangium cellulosum (strain So ce56)) protein is Acetyl-coenzyme A carboxylase carboxyl transferase subunit beta.